The chain runs to 100 residues: Urease subunit gamma (100 aa).

This sequence belongs to the urease gamma subunit family. In terms of assembly, heterotrimer of UreA (gamma), UreB (beta) and UreC (alpha) subunits. Three heterotrimers associate to form the active enzyme.

The protein localises to the cytoplasm. The enzyme catalyses urea + 2 H2O + H(+) = hydrogencarbonate + 2 NH4(+). The protein operates within nitrogen metabolism; urea degradation; CO(2) and NH(3) from urea (urease route): step 1/1. The sequence is that of Urease subunit gamma from Rhizobium etli (strain CIAT 652).